The sequence spans 497 residues: Vacuolar-processing enzyme (497 aa).

The first 31 residues, 1–31 (METHKSLLFFTNYVLFLVFTLSFLPIPGLLA), serve as a signal peptide directing secretion. The active site involves His-180. Cys-222 acts as the Nucleophile in catalysis. Cysteines 255 and 269 form a disulfide. 2 N-linked (GlcNAc...) asparagine glycosylation sites follow: Asn-320 and Asn-374. Disulfide bonds link Cys-433/Cys-463 and Cys-445/Cys-480.

Belongs to the peptidase C13 family.

In terms of biological role, asparagine-specific endopeptidase involved in the processing of vacuolar seed protein precursors into the mature forms. This is Vacuolar-processing enzyme from Ricinus communis (Castor bean).